The sequence spans 345 residues: Protein RecA (345 aa).

80 to 87 is an ATP binding site; the sequence is GPESSGKT.

It belongs to the RecA family.

It is found in the cytoplasm. Can catalyze the hydrolysis of ATP in the presence of single-stranded DNA, the ATP-dependent uptake of single-stranded DNA by duplex DNA, and the ATP-dependent hybridization of homologous single-stranded DNAs. It interacts with LexA causing its activation and leading to its autocatalytic cleavage. In Mycoplasma mycoides subsp. mycoides SC (strain CCUG 32753 / NCTC 10114 / PG1), this protein is Protein RecA.